A 463-amino-acid polypeptide reads, in one-letter code: L-seryl-tRNA(Sec) selenium transferase (463 aa).

The residue at position 295 (Lys295) is an N6-(pyridoxal phosphate)lysine.

The protein belongs to the SelA family. As to quaternary structure, homodecamer; pentamer of dimers. Binds only one seryl-tRNA(Sec) per dimer. Pyridoxal 5'-phosphate serves as cofactor.

The protein resides in the cytoplasm. It catalyses the reaction L-seryl-tRNA(Sec) + selenophosphate + H(+) = L-selenocysteinyl-tRNA(Sec) + phosphate. It functions in the pathway aminoacyl-tRNA biosynthesis; selenocysteinyl-tRNA(Sec) biosynthesis; selenocysteinyl-tRNA(Sec) from L-seryl-tRNA(Sec) (bacterial route): step 1/1. In terms of biological role, converts seryl-tRNA(Sec) to selenocysteinyl-tRNA(Sec) required for selenoprotein biosynthesis. The chain is L-seryl-tRNA(Sec) selenium transferase from Escherichia coli O6:H1 (strain CFT073 / ATCC 700928 / UPEC).